The chain runs to 528 residues: Na(+)/H(+) antiporter NhaB (528 aa).

11 helical membrane-spanning segments follow: residues 29 to 49, 52 to 72, 95 to 115, 139 to 159, 203 to 223, 248 to 268, 304 to 324, 349 to 369, 390 to 410, 448 to 468, and 476 to 496; these read LIINPIVFYINPFVAGWLLVI, IFTLAMALKCYPLQPGGLLAI, VLLLLVFMVAGIYFMKQLLLF, AFLSAFLDALTVIAVIIAVAV, LLMHAGVGTALGGVCTMVGEP, VPVFFAGIFTCFLVEKFKIFG, AFIGIWLIVGLALHLASVGLI, EEALPFTALLAVFFAVVAVII, LVIFYIANGLLSMVSDNVFVG, ATPNGQAAFLFLLTSAIAPLI, and VWMALPYTIVLSIVGVLAIEL.

This sequence belongs to the NhaB Na(+)/H(+) (TC 2.A.34) antiporter family.

It localises to the cell inner membrane. It catalyses the reaction 2 Na(+)(in) + 3 H(+)(out) = 2 Na(+)(out) + 3 H(+)(in). Its function is as follows. Na(+)/H(+) antiporter that extrudes sodium in exchange for external protons. The sequence is that of Na(+)/H(+) antiporter NhaB from Shewanella woodyi (strain ATCC 51908 / MS32).